We begin with the raw amino-acid sequence, 554 residues long: Suppressor of hairless homolog (554 aa).

The disordered stretch occupies residues 1 to 31 (MYHPHHLPAHGQVQSHQHREDAAATSSRDVN). 3 DNA-binding regions span residues 83 to 90 (KSYGNEKR), 218 to 227 (RLRSQTVSTR), and 291 to 323 (RKVDKQTAILDADDPVSQLHKCAFYLKDTERMY). One can recognise an IPT/TIG domain in the interval 381–471 (PNVHSLQLNG…YPTNLTFTFT (91 aa)). Residues 489-554 (GSKRPSASMP…NGANMLRTAS (66 aa)) form a disordered region. The segment covering 508 to 519 (DSGRGNESDRGD) has biased composition (basic and acidic residues).

Belongs to the Su(H) family. In terms of assembly, interacts with activated Notch proteins.

Its subcellular location is the nucleus. Transcriptional regulator that plays a central role in Notch signaling, a signaling pathway involved in cell-cell communication that regulates a broad spectrum of cell-fate determinations. Acts as a transcriptional repressor when it is not associated with Notch proteins. When associated with some Notch protein, it acts as a transcriptional activator that activates transcription of Notch target genes. Required for the transcriptional expression of Brachyury, suggesting that it participates in notochord differentiation. This Ciona intestinalis (Transparent sea squirt) protein is Suppressor of hairless homolog (Su(H)).